The chain runs to 238 residues: Ribonuclease PH (238 aa).

Phosphate-binding positions include R86 and 124–126 (GTR).

This sequence belongs to the RNase PH family. In terms of assembly, homohexameric ring arranged as a trimer of dimers.

The catalysed reaction is tRNA(n+1) + phosphate = tRNA(n) + a ribonucleoside 5'-diphosphate. Its function is as follows. Phosphorolytic 3'-5' exoribonuclease that plays an important role in tRNA 3'-end maturation. Removes nucleotide residues following the 3'-CCA terminus of tRNAs; can also add nucleotides to the ends of RNA molecules by using nucleoside diphosphates as substrates, but this may not be physiologically important. Probably plays a role in initiation of 16S rRNA degradation (leading to ribosome degradation) during starvation. The sequence is that of Ribonuclease PH from Maricaulis maris (strain MCS10) (Caulobacter maris).